The following is a 339-amino-acid chain: Protein FAM76B (339 aa).

The residue at position 2 (Ala2) is an N-acetylalanine. Residues Ser22 and Ser148 each carry the phosphoserine modification. Residues 144–243 (EQRKSLGSSH…INQSADSGGT (100 aa)) are disordered. Positions 148-160 (SLGSSHSNSSSSS) are enriched in low complexity. Residues 167 to 189 (HHPKHHHHHHHHHHRHSSSHHKI) show a composition bias toward basic residues. Phosphoserine is present on Ser193. Position 215 is a phosphothreonine (Thr215). The span at 215–224 (TPKKKPKLES) shows a compositional bias: basic and acidic residues. Residues 228 to 243 (NGDSSSINQSADSGGT) are compositionally biased toward polar residues. Residues 248–328 (LISQLKEEVM…QVAALSKGKK (81 aa)) adopt a coiled-coil conformation.

It belongs to the FAM76 family. In terms of assembly, interacts with HNRNPA2B1 (via C-terminus); the interaction results in retention of HNRNPA2B1 in the nucleus and inhibition of the NF-kappa-B-mediated inflammatory pathway.

It localises to the nucleus speckle. In terms of biological role, negatively regulates the NF-kappa-B-mediated inflammatory pathway by preventing the translocation of HNRNPA2B1 from the nucleus to the cytoplasm. Inhibits the PI3K/Akt/NF-kappa-B pathway-mediated polarization of M1 macrophages by binding to and stabilizing PIK3CD mRNA, resulting in increased levels of PIK3CD protein and increased levels of phosphorylated downstream target AKT which leads to decreased NF-kappa-B signaling. This Homo sapiens (Human) protein is Protein FAM76B (FAM76B).